Consider the following 246-residue polypeptide: NAD(P)H-quinone oxidoreductase subunit K (246 aa).

[4Fe-4S] cluster is bound by residues Cys-62, Cys-63, Cys-127, and Cys-158.

Belongs to the complex I 20 kDa subunit family. As to quaternary structure, NDH-1 can be composed of about 15 different subunits; different subcomplexes with different compositions have been identified which probably have different functions. It depends on [4Fe-4S] cluster as a cofactor.

It localises to the cellular thylakoid membrane. The catalysed reaction is a plastoquinone + NADH + (n+1) H(+)(in) = a plastoquinol + NAD(+) + n H(+)(out). The enzyme catalyses a plastoquinone + NADPH + (n+1) H(+)(in) = a plastoquinol + NADP(+) + n H(+)(out). In terms of biological role, NDH-1 shuttles electrons from an unknown electron donor, via FMN and iron-sulfur (Fe-S) centers, to quinones in the respiratory and/or the photosynthetic chain. The immediate electron acceptor for the enzyme in this species is believed to be plastoquinone. Couples the redox reaction to proton translocation, and thus conserves the redox energy in a proton gradient. Cyanobacterial NDH-1 also plays a role in inorganic carbon-concentration. This Parasynechococcus marenigrum (strain WH8102) protein is NAD(P)H-quinone oxidoreductase subunit K.